Consider the following 408-residue polypeptide: Probable medium-chain specific acyl-CoA dehydrogenase 2, mitochondrial (408 aa).

The N-terminal 5 residues, 1–5 (MLSRL), are a transit peptide targeting the mitochondrion. FAD contacts are provided by residues 143–152 (YCVTEPGAGS) and 176–178 (WIT). Residue Ser152 participates in substrate binding. 263 to 266 (DMTR) is a binding site for substrate. Residues 291–293 (RKA), 301–302 (HQ), and 355–359 (MLFRC) contribute to the FAD site. Catalysis depends on Glu382, which acts as the Proton acceptor. Residue Gly383 coordinates substrate. Position 384–386 (384–386 (TSQ)) interacts with FAD. Arg394 contacts substrate.

The protein belongs to the acyl-CoA dehydrogenase family. In terms of assembly, homotetramer. It depends on FAD as a cofactor.

The protein localises to the mitochondrion matrix. It carries out the reaction a medium-chain 2,3-saturated fatty acyl-CoA + oxidized [electron-transfer flavoprotein] + H(+) = a medium-chain (2E)-enoyl-CoA + reduced [electron-transfer flavoprotein]. It functions in the pathway lipid metabolism; mitochondrial fatty acid beta-oxidation. Functionally, this enzyme is specific for acyl chain lengths of 4 to 16. This is Probable medium-chain specific acyl-CoA dehydrogenase 2, mitochondrial from Caenorhabditis briggsae.